Reading from the N-terminus, the 153-residue chain is Aspartate carbamoyltransferase regulatory chain (153 aa).

Residues C109, C114, C138, and C141 each contribute to the Zn(2+) site.

Belongs to the PyrI family. As to quaternary structure, contains catalytic and regulatory chains. The cofactor is Zn(2+).

Its function is as follows. Involved in allosteric regulation of aspartate carbamoyltransferase. In Salmonella arizonae (strain ATCC BAA-731 / CDC346-86 / RSK2980), this protein is Aspartate carbamoyltransferase regulatory chain.